Consider the following 174-residue polypeptide: MLPSTNDKQLIEVEEGTKIIKGSNVIITTLDKVVNWGRSNSLWPLTFGLACCAIEMMAAGASHLDLDRFGILFRASPRQADVIIIAGTVTYKMAPIVKRVYDQMPEPKYVIAMGSCACTGGIFNTYSTVQGADQFLPVDVYVPGCPPRPEALMYGVLKLKEKIMREEGRWGRLK.

The [4Fe-4S] cluster site is built by Cys51, Cys52, Cys116, and Cys145.

This sequence belongs to the complex I 20 kDa subunit family. NDH-1 is composed of 14 different subunits. Subunits NuoB, C, D, E, F, and G constitute the peripheral sector of the complex. Requires [4Fe-4S] cluster as cofactor.

It localises to the cell inner membrane. It carries out the reaction a quinone + NADH + 5 H(+)(in) = a quinol + NAD(+) + 4 H(+)(out). Functionally, NDH-1 shuttles electrons from NADH, via FMN and iron-sulfur (Fe-S) centers, to quinones in the respiratory chain. The immediate electron acceptor for the enzyme in this species is believed to be ubiquinone. Couples the redox reaction to proton translocation (for every two electrons transferred, four hydrogen ions are translocated across the cytoplasmic membrane), and thus conserves the redox energy in a proton gradient. This chain is NADH-quinone oxidoreductase subunit B 2, found in Thermodesulfovibrio yellowstonii (strain ATCC 51303 / DSM 11347 / YP87).